Here is a 70-residue protein sequence, read N- to C-terminus: Large ribosomal subunit protein bL31 (70 aa).

Zn(2+) is bound by residues cysteine 16, cysteine 18, cysteine 37, and cysteine 40.

Belongs to the bacterial ribosomal protein bL31 family. Type A subfamily. Part of the 50S ribosomal subunit. Zn(2+) is required as a cofactor.

Its function is as follows. Binds the 23S rRNA. The sequence is that of Large ribosomal subunit protein bL31 from Actinobacillus pleuropneumoniae serotype 5b (strain L20).